A 453-amino-acid chain; its full sequence is tRNA modification GTPase MnmE (453 aa).

Residues Arg-22, Glu-79, and Lys-119 each coordinate (6S)-5-formyl-5,6,7,8-tetrahydrofolate. Positions 215–376 (GMKVVIAGRP…LKQHLKSLMG (162 aa)) constitute a TrmE-type G domain. Asn-225 is a K(+) binding site. GTP-binding positions include 225-230 (NAGKSS), 244-250 (TEIAGTT), 269-272 (DTAG), and 334-337 (NKAD). Position 229 (Ser-229) interacts with Mg(2+). The K(+) site is built by Thr-244, Ile-246, and Thr-249. Position 250 (Thr-250) interacts with Mg(2+). (6S)-5-formyl-5,6,7,8-tetrahydrofolate is bound at residue Lys-453.

It belongs to the TRAFAC class TrmE-Era-EngA-EngB-Septin-like GTPase superfamily. TrmE GTPase family. Homodimer. Heterotetramer of two MnmE and two MnmG subunits. It depends on K(+) as a cofactor.

Its subcellular location is the cytoplasm. Its function is as follows. Exhibits a very high intrinsic GTPase hydrolysis rate. Involved in the addition of a carboxymethylaminomethyl (cmnm) group at the wobble position (U34) of certain tRNAs, forming tRNA-cmnm(5)s(2)U34. The chain is tRNA modification GTPase MnmE from Shewanella baltica (strain OS195).